A 105-amino-acid polypeptide reads, in one-letter code: Urease subunit beta (105 aa).

This sequence belongs to the urease beta subunit family. As to quaternary structure, heterotrimer of UreA (gamma), UreB (beta) and UreC (alpha) subunits. Three heterotrimers associate to form the active enzyme.

The protein localises to the cytoplasm. The catalysed reaction is urea + 2 H2O + H(+) = hydrogencarbonate + 2 NH4(+). It functions in the pathway nitrogen metabolism; urea degradation; CO(2) and NH(3) from urea (urease route): step 1/1. The protein is Urease subunit beta of Marinomonas sp. (strain MWYL1).